Reading from the N-terminus, the 455-residue chain is Probable xyloglucan galactosyltransferase GT17 (455 aa).

Residues 1–34 lie on the Cytoplasmic side of the membrane; sequence MTFNKRQVKINHWPEKNDKEKQKYSKNRETVKLT. Residues 35-55 form a helical; Signal-anchor for type II membrane protein membrane-spanning segment; sequence LLTLLLLCSICFLFLTLNFPF. Topologically, residues 56 to 455 are lumenal; it reads TIEFTASIPR…QARDNVVVSL (400 aa). Residues Asn-70, Asn-169, Asn-230, Asn-390, and Asn-426 are each glycosylated (N-linked (GlcNAc...) asparagine).

It belongs to the glycosyltransferase 47 family. As to expression, expressed in roots and hypocotyls.

The protein localises to the golgi apparatus membrane. Functionally, functions in xyloglucan synthesis by adding side chains to the xylosylated glucan backbone. Involved in the galactosylation of hemicellulose xyloglucan. This is Probable xyloglucan galactosyltransferase GT17 from Arabidopsis thaliana (Mouse-ear cress).